The sequence spans 322 residues: Sideroflexin-1 (322 aa).

S2 carries the N-acetylserine modification. Residues 2–102 (SGELPPNINI…MSAQVPMNMT (101 aa)) lie on the Mitochondrial matrix side of the membrane. Residues 103-120 (ITGCMMTFYRTTPAVLFW) form a helical membrane-spanning segment. Residues 121-146 (QWINQSFNAVVNYTNRSGDAPLTVNE) lie on the Mitochondrial intermembrane side of the membrane. Residues 147-167 (LGTAYVSATTGAVATALGLNA) traverse the membrane as a helical segment. Residues 168-174 (LTKHVSP) lie on the Mitochondrial matrix side of the membrane. The helical transmembrane segment at 175-195 (LIGRFVPFAAVAAANCINIPL) threads the bilayer. Topologically, residues 196-228 (MRQRELKVGIPVTDENGNRLGESANAAKQAITQ) are mitochondrial intermembrane. The chain crosses the membrane as a helical span at residues 229–249 (VVVSRILMAAPGMAIPPFIMN). Topologically, residues 250–266 (TLEKKAFLKRFPWMSAP) are mitochondrial matrix. A helical transmembrane segment spans residues 267 to 287 (IQVGLVGFCLVFATPLCCALF). The Mitochondrial intermembrane portion of the chain corresponds to 288–322 (PQKSSMSVTSLEAELQAKIQESHPELRRVYFNKGL).

Belongs to the sideroflexin family. In terms of tissue distribution, highly expressed in tissues with high one-carbon metabolism activity, such as blood, liver and kidney.

The protein localises to the mitochondrion inner membrane. It carries out the reaction L-serine(in) = L-serine(out). It catalyses the reaction L-alanine(in) = L-alanine(out). The enzyme catalyses L-cysteine(in) = L-cysteine(out). Its function is as follows. Amino acid transporter importing serine, an essential substrate of the mitochondrial branch of the one-carbon pathway, into mitochondria. Mitochondrial serine is then converted to glycine and formate, which exits to the cytosol where it is used to generate the charged folates that serve as one-carbon donors. May also transport other amino acids including alanine and cysteine. This Homo sapiens (Human) protein is Sideroflexin-1.